The following is a 369-amino-acid chain: 2-aminoethylphosphonate--pyruvate transaminase (369 aa).

The residue at position 193 (K193) is an N6-(pyridoxal phosphate)lysine.

The protein belongs to the class-V pyridoxal-phosphate-dependent aminotransferase family. PhnW subfamily. As to quaternary structure, homodimer. The cofactor is pyridoxal 5'-phosphate.

The catalysed reaction is (2-aminoethyl)phosphonate + pyruvate = phosphonoacetaldehyde + L-alanine. In terms of biological role, involved in phosphonate degradation. The protein is 2-aminoethylphosphonate--pyruvate transaminase of Burkholderia pseudomallei (strain K96243).